Consider the following 86-residue polypeptide: RNA-binding protein Hfq (86 aa).

The 60-residue stretch at 9–68 (DPFLNALRRERIPVSIYLVNGIKLQGQIESFDQFVILLKNTVNQMVYKHAISTVVPARPV) folds into the Sm domain. The segment at 65-86 (ARPVSHHSGERGSDRPSEKSED) is disordered. Residues 71 to 86 (HSGERGSDRPSEKSED) are compositionally biased toward basic and acidic residues.

The protein belongs to the Hfq family. Homohexamer.

Its function is as follows. RNA chaperone that binds small regulatory RNA (sRNAs) and mRNAs to facilitate mRNA translational regulation in response to envelope stress, environmental stress and changes in metabolite concentrations. Also binds with high specificity to tRNAs. The sequence is that of RNA-binding protein Hfq from Vibrio vulnificus (strain YJ016).